We begin with the raw amino-acid sequence, 225 residues long: Sugar fermentation stimulation protein homolog (225 aa).

Belongs to the SfsA family.

The chain is Sugar fermentation stimulation protein homolog from Sulfurisphaera tokodaii (strain DSM 16993 / JCM 10545 / NBRC 100140 / 7) (Sulfolobus tokodaii).